The sequence spans 180 residues: Probable macrolide acetyltransferase (180 aa).

Belongs to the transferase hexapeptide repeat family.

The chain is Probable macrolide acetyltransferase from Lysinibacillus sphaericus (Bacillus sphaericus).